The following is a 249-amino-acid chain: Oxidoreductase asL5 (249 aa).

NADP(+) is bound by residues I21, K45, N90, Y155, K159, I188, and T190. Y155 serves as the catalytic Proton acceptor. Catalysis depends on K159, which acts as the Lowers pKa of active site Tyr.

This sequence belongs to the short-chain dehydrogenases/reductases (SDR) family.

Its function is as follows. Oxidoreductase; part of the gene cluster that mediates the biosynthesis of xenovulene A, an unusual meroterpenoid that has potent inhibitory effects on the human gamma-aminobutyrate A (GABAA) benzodiazepine receptor. The first step of xenovulene A biosynthesis is the biosynthesis of 3-methylorcinaldehyde performed by the non-reducing polyketide synthase aspks1. The salicylate hydroxylase asL1 then catalyzes the oxidative dearomatization of 3-methylorcinaldehyde to yield a dearomatized hydroxycyclohexadione. The 2-oxoglutarate-dependent dioxygenase asL3 further catalyzes the oxidative ring expansion to provide the first tropolone metabolite. The cytochrome P450 monooxygenase asR2 allows the synthesis of tropolone hemiacetal. In parallel, a previously unrecognised class of terpene cyclase, asR6, produces alpha-humulene from farnesylpyrophosphate (FPP). The putative Diels-Alderase asR5 probably catalyzes the formation of the tropolone-humulene skeleton by linking humulene and the polyketide moiety. Oxidative-ring contractions catalyzed by asL4 and asL6 then processively remove carbon atoms from the polyketide to yield xenovulene A. This is Oxidoreductase asL5 from Sarocladium schorii (Acremonium strictum (strain IMI 501407)).